Consider the following 189-residue polypeptide: MGTPNDQAVLQAIFNPDTPFGDIVGLDLGEEAEKEEREEDEVFPQAQLEQSKALELQGVMAAEAGDLSTALERFGQAICLLPERASAYNNRAQARRLQGDVAGALEDLERAVELSGGRGRAARQSFVQRGLLARLQGRDDDARRDFERAARLGSPFARRQLVLLNPYAALCNRMLADMMGQLRRPRDSR.

TPR repeat units lie at residues 51-84 (SKALELQGVMAAEAGDLSTALERFGQAICLLPER), 86-118 (SAYNNRAQARRLQGDVAGALEDLERAVELSGGR), and 123-156 (RQSFVQRGLLARLQGRDDDARRDFERAARLGSPF).

Belongs to the TTC36 family.

This chain is Tetratricopeptide repeat protein 36 (TTC36), found in Homo sapiens (Human).